The sequence spans 373 residues: 3-dehydroquinate synthase (373 aa).

Residues 120-124, 144-145, K157, K166, and 184-187 each bind NAD(+); these read GVVGD, TT, and FLKT. E199, H262, and H278 together coordinate Zn(2+).

The protein belongs to the sugar phosphate cyclases superfamily. Dehydroquinate synthase family. The cofactor is NAD(+). Co(2+) serves as cofactor. Zn(2+) is required as a cofactor.

The protein resides in the cytoplasm. The enzyme catalyses 7-phospho-2-dehydro-3-deoxy-D-arabino-heptonate = 3-dehydroquinate + phosphate. Its pathway is metabolic intermediate biosynthesis; chorismate biosynthesis; chorismate from D-erythrose 4-phosphate and phosphoenolpyruvate: step 2/7. In terms of biological role, catalyzes the conversion of 3-deoxy-D-arabino-heptulosonate 7-phosphate (DAHP) to dehydroquinate (DHQ). The chain is 3-dehydroquinate synthase from Clostridium tetani (strain Massachusetts / E88).